Reading from the N-terminus, the 90-residue chain is Small ribosomal subunit protein uS15c (90 aa).

The protein belongs to the universal ribosomal protein uS15 family. As to quaternary structure, part of the 30S ribosomal subunit.

The protein resides in the plastid. It localises to the chloroplast. The protein is Small ribosomal subunit protein uS15c (rps15) of Gossypium barbadense (Sea Island cotton).